The following is a 263-amino-acid chain: Cell division coordinator CpoB (263 aa).

An N-terminal signal peptide occupies residues 1 to 26; the sequence is MSSNFRHQLLSLSLLVGIAAPWAAFA. The stretch at 44–88 forms a coiled coil; sequence QLERISNAHSQLLTQLQQQLSDNQSDIDSLRGQIQENQYQLNQVV. Over residues 106-123 the composition is skewed to low complexity; that stretch reads AAAQSTSGDQSGAAASTT. The interval 106–139 is disordered; it reads AAAQSTSGDQSGAAASTTPTADAGTANAGAPVKS. 3 TPR repeats span residues 143–176, 180–213, and 217–250; these read NTDY…YPDS, PNAN…YPKS, and ADAM…YPGT.

The protein belongs to the CpoB family. Homotrimer. Interacts directly with the central domain of TolA and with PBP1B. Binding to TolA disrupts the homotrimer to form a YbgF/TolA heterodimer with weak affinity. Forms a quaternary complex with PBP1B-LpoB and TolA.

Its subcellular location is the periplasm. Mediates coordination of peptidoglycan synthesis and outer membrane constriction during cell division. Promotes physical and functional coordination of the PBP1B-LpoB and Tol machines, and regulates PBP1B activity in response to Tol energy state. In Escherichia coli (strain K12), this protein is Cell division coordinator CpoB.